A 1377-amino-acid polypeptide reads, in one-letter code: Carboxypeptidase D (1377 aa).

The signal sequence occupies residues 1–37 (MASGRDERPPWRLGRLRLLPPPPLLLLLLLLRSSAQA). Residues 38 to 1296 (AHIKKAEATT…DNRIFGLPRE (1259 aa)) lie on the Extracellular side of the membrane. One can recognise a Peptidase M14 1 domain in the interval 62 to 379 (HYYHEAALGE…ESLITLIEKV (318 aa)). Zn(2+) contacts are provided by histidine 138 and glutamate 141. The Cell attachment site signature appears at 161–163 (RGD). Residues asparagine 171 and asparagine 216 are each glycosylated (N-linked (GlcNAc...) asparagine). A disordered region spans residues 188 to 231 (RAREGDCGLGDSGPPGTSGRDNSRGRDLNRSFPDQFSTGEPPSL). Position 256 (histidine 256) interacts with Zn(2+). Position 264 is a phosphotyrosine (tyrosine 264). Phosphoserine is present on serine 269. Catalysis depends on glutamate 349, which acts as the Proton donor/acceptor. Residues asparagine 398, asparagine 409, asparagine 428, and asparagine 521 are each glycosylated (N-linked (GlcNAc...) asparagine). The region spanning 501-791 (HHHHFPDMEI…RSLIQFMKQV (291 aa)) is the Peptidase M14 2 domain. Zn(2+) contacts are provided by histidine 563 and glutamate 566. N-linked (GlcNAc...) asparagine glycosylation occurs at asparagine 625. Position 670 (histidine 670) interacts with Zn(2+). The active-site Proton donor/acceptor is glutamate 761. N-linked (GlcNAc...) asparagine glycosylation is found at asparagine 810, asparagine 854, asparagine 866, asparagine 878, asparagine 952, and asparagine 975. The tract at residues 874–898 (ADANNESKKGRGHSTSTDDTSDPTS) is disordered. Positions 929–1208 (RYHSYKDLSE…KSLLSMLVEV (280 aa)) constitute a Peptidase M14 3 domain. The segment covering 1038–1047 (RERAQEKDCT) has biased composition (basic and acidic residues). The segment at 1038 to 1064 (RERAQEKDCTSKTGHTNAHGKDLDTDF) is disordered. Asparagine 1067 and asparagine 1139 each carry an N-linked (GlcNAc...) asparagine glycan. Residues 1297–1317 (LVVTVSGATMSALILTACIIW) form a helical membrane-spanning segment. S-palmitoyl cysteine attachment occurs at residues cysteine 1314, cysteine 1318, and cysteine 1320. Over 1318-1377 (CICSIKSNRHKDGFHRLRQHHDEYEDEIRMMSTGSKKSLLSHEFQDETDTEEETLYSSKH) the chain is Cytoplasmic. Serine 1355 and serine 1358 each carry phosphoserine. The interval 1356–1377 (LLSHEFQDETDTEEETLYSSKH) is disordered. Threonine 1365 and threonine 1367 each carry phosphothreonine.

This sequence belongs to the peptidase M14 family. The cofactor is Zn(2+).

The protein localises to the cell membrane. It catalyses the reaction Releases C-terminal Arg and Lys from polypeptides.. This Mus musculus (Mouse) protein is Carboxypeptidase D (Cpd).